Consider the following 464-residue polypeptide: Opioid growth factor receptor-like protein 1 (464 aa).

Disordered stretches follow at residues 1 to 91 and 309 to 464; these read MGNL…AKPK and ENFI…TSSG. Over residues 43–59 the composition is skewed to basic and acidic residues; it reads QQHDEPEQPKQPPERAG. A compositionally biased stretch (low complexity) spans 74–86; sequence AAGAEQGGESTEG. The span at 316–325 shows a compositional bias: basic and acidic residues; that stretch reads PKKELPERSK. Residues 327 to 342 show a composition bias toward polar residues; that stretch reads QKTPTLPASGSNGQTS. Basic and acidic residues-rich tracts occupy residues 363 to 382, 390 to 400, and 425 to 439; these read SVEEKKGASREPGEEADKPS, PKPRNTEKDSA, and SEKDGEGEDQSKDSE. Positions 452-464 are enriched in polar residues; it reads AQQNATNPQTSSG.

This sequence belongs to the opioid growth factor receptor family.

This is Opioid growth factor receptor-like protein 1 (Ogfrl1) from Mus musculus (Mouse).